We begin with the raw amino-acid sequence, 272 residues long: Ribosomal RNA small subunit methyltransferase A (272 aa).

H10, L12, G37, E57, D82, and N98 together coordinate S-adenosyl-L-methionine.

It belongs to the class I-like SAM-binding methyltransferase superfamily. rRNA adenine N(6)-methyltransferase family. RsmA subfamily.

The protein resides in the cytoplasm. It catalyses the reaction adenosine(1518)/adenosine(1519) in 16S rRNA + 4 S-adenosyl-L-methionine = N(6)-dimethyladenosine(1518)/N(6)-dimethyladenosine(1519) in 16S rRNA + 4 S-adenosyl-L-homocysteine + 4 H(+). Its function is as follows. Specifically dimethylates two adjacent adenosines (A1518 and A1519) in the loop of a conserved hairpin near the 3'-end of 16S rRNA in the 30S particle. May play a critical role in biogenesis of 30S subunits. In Gloeobacter violaceus (strain ATCC 29082 / PCC 7421), this protein is Ribosomal RNA small subunit methyltransferase A.